Reading from the N-terminus, the 234-residue chain is MEMGRRIHSELRNRAPSDVKELALDNSRSNEGKLEALTDEFEELEFLSKINGGLTSISDLPKLKLRKLELRVSGGLEVLAEKCPNLTHLYLSGNKIKDLSTIEPLKQLENLKSLDLFNCEVTNLNDYGENVFKLLLQLTYLDSCYWDHKEAPYSDIEDHVEGLDDEEEGEHEEEYDEDAQVVEDEEGEEEEEEGEEEDVSGGDEEDEEGYNDGEVDGEEDEEELGEEERGQKRK.

LRR repeat units lie at residues 44 to 63 (LEFLSKINGGLTSISDLPKL), 64 to 84 (KLRKLELRVSGGLEVLAEKCP), 85 to 107 (NLTHLYLSGNKIKDLSTIEPLKQ), and 111 to 134 (LKSLDLFNCEVTNLNDYGENVFKL). The segment at 161–234 (EGLDDEEEGE…GEEERGQKRK (74 aa)) is disordered. Residues 163-226 (LDDEEEGEHE…GEEDEEELGE (64 aa)) show a composition bias toward acidic residues.

This sequence belongs to the ANP32 family. Expressed in activated stem cells, such as mobilized CD34+ cells and cord blood CD34+ cells, but not in resting bone marrow CD34+ cells. Expressed in a variety of neoplastic cell lines, mainly in prostatic adenocarcinoma cell lines. Not expressed in normal prostatic tissue.

This is an uncharacterized protein from Homo sapiens (Human).